The chain runs to 231 residues: Dihydropteridine reductase (231 aa).

An NADP(+)-binding site is contributed by 6–30 (LVLGGSGALGAEVVKFFKSKSWNTI). The active-site Proton acceptor is the Tyr-138.

It belongs to the short-chain dehydrogenases/reductases (SDR) family. In terms of assembly, homodimer.

The enzyme catalyses 5,6,7,8-tetrahydropteridine + NAD(+) = 6,7-dihydropteridine + NADH + H(+). The catalysed reaction is 5,6,7,8-tetrahydropteridine + NADP(+) = 6,7-dihydropteridine + NADPH + H(+). Functionally, the product of this enzyme, tetrahydrobiopterin (BH-4), is an essential cofactor for phenylalanine, tyrosine, and tryptophan hydroxylases. The protein is Dihydropteridine reductase (qdpr) of Dictyostelium discoideum (Social amoeba).